Consider the following 287-residue polypeptide: Bifunctional protein FolD (287 aa).

NADP(+)-binding positions include 164 to 166 (GSS), Ser-189, and Ile-230.

Belongs to the tetrahydrofolate dehydrogenase/cyclohydrolase family. In terms of assembly, homodimer.

The catalysed reaction is (6R)-5,10-methylene-5,6,7,8-tetrahydrofolate + NADP(+) = (6R)-5,10-methenyltetrahydrofolate + NADPH. It catalyses the reaction (6R)-5,10-methenyltetrahydrofolate + H2O = (6R)-10-formyltetrahydrofolate + H(+). The protein operates within one-carbon metabolism; tetrahydrofolate interconversion. Catalyzes the oxidation of 5,10-methylenetetrahydrofolate to 5,10-methenyltetrahydrofolate and then the hydrolysis of 5,10-methenyltetrahydrofolate to 10-formyltetrahydrofolate. In Aliarcobacter butzleri (strain RM4018) (Arcobacter butzleri), this protein is Bifunctional protein FolD.